The following is a 293-amino-acid chain: Elongation factor Ts (293 aa).

The involved in Mg(2+) ion dislocation from EF-Tu stretch occupies residues 80–83 (TDFV).

It belongs to the EF-Ts family.

It is found in the cytoplasm. Its function is as follows. Associates with the EF-Tu.GDP complex and induces the exchange of GDP to GTP. It remains bound to the aminoacyl-tRNA.EF-Tu.GTP complex up to the GTP hydrolysis stage on the ribosome. The chain is Elongation factor Ts from Burkholderia thailandensis (strain ATCC 700388 / DSM 13276 / CCUG 48851 / CIP 106301 / E264).